Here is a 100-residue protein sequence, read N- to C-terminus: Urease subunit gamma (100 aa).

Belongs to the urease gamma subunit family. Heterotrimer of UreA (gamma), UreB (beta) and UreC (alpha) subunits. Three heterotrimers associate to form the active enzyme.

The protein resides in the cytoplasm. The catalysed reaction is urea + 2 H2O + H(+) = hydrogencarbonate + 2 NH4(+). Its pathway is nitrogen metabolism; urea degradation; CO(2) and NH(3) from urea (urease route): step 1/1. The polypeptide is Urease subunit gamma (Prochlorococcus marinus (strain MIT 9312)).